The sequence spans 239 residues: Large ribosomal subunit protein uL2 (239 aa).

A disordered region spans residues 205-224 (GGHQHCGRPKTVARGTSPGR).

It belongs to the universal ribosomal protein uL2 family. In terms of assembly, part of the 50S ribosomal subunit. Forms a bridge to the 30S subunit in the 70S ribosome.

Its function is as follows. One of the primary rRNA binding proteins. Required for association of the 30S and 50S subunits to form the 70S ribosome, for tRNA binding and peptide bond formation. It has been suggested to have peptidyltransferase activity; this is somewhat controversial. Makes several contacts with the 16S rRNA in the 70S ribosome. This Methanoculleus marisnigri (strain ATCC 35101 / DSM 1498 / JR1) protein is Large ribosomal subunit protein uL2.